Consider the following 347-residue polypeptide: Zinc-type alcohol dehydrogenase-like protein C16A3.02c (347 aa).

This sequence belongs to the zinc-containing alcohol dehydrogenase family. Quinone oxidoreductase subfamily.

The protein resides in the golgi apparatus. The protein localises to the endoplasmic reticulum. This Schizosaccharomyces pombe (strain 972 / ATCC 24843) (Fission yeast) protein is Zinc-type alcohol dehydrogenase-like protein C16A3.02c.